Reading from the N-terminus, the 391-residue chain is uncharacterized protein (391 aa).

In terms of domain architecture, Flavodoxin-like spans 247–387 (AVIVYATIYS…KIKEFGRKLA (141 aa)).

This is an uncharacterized protein from Methanocaldococcus jannaschii (strain ATCC 43067 / DSM 2661 / JAL-1 / JCM 10045 / NBRC 100440) (Methanococcus jannaschii).